The chain runs to 156 residues: uncharacterized protein (156 aa).

The signal sequence occupies residues 1–18 (MKKLLSIFLMAFSLNAFA). A Thioredoxin domain is found at 19-156 (QTNLADVQLK…AEQIRVFAEK (138 aa)). A disulfide bridge links cysteine 54 with cysteine 57.

This sequence belongs to the thioredoxin family.

This is an uncharacterized protein from Haemophilus influenzae (strain ATCC 51907 / DSM 11121 / KW20 / Rd).